Reading from the N-terminus, the 331-residue chain is Glycerol-3-phosphate dehydrogenase [NAD(P)+] (331 aa).

Positions 13, 33, and 103 each coordinate NADPH. Sn-glycerol 3-phosphate contacts are provided by K103, G131, and T133. A135 serves as a coordination point for NADPH. Residues K187, D240, S250, R251, and N252 each contribute to the sn-glycerol 3-phosphate site. K187 (proton acceptor) is an active-site residue. R251 is a binding site for NADPH. NADPH-binding residues include V275 and E277.

This sequence belongs to the NAD-dependent glycerol-3-phosphate dehydrogenase family.

It localises to the cytoplasm. The catalysed reaction is sn-glycerol 3-phosphate + NAD(+) = dihydroxyacetone phosphate + NADH + H(+). The enzyme catalyses sn-glycerol 3-phosphate + NADP(+) = dihydroxyacetone phosphate + NADPH + H(+). It functions in the pathway membrane lipid metabolism; glycerophospholipid metabolism. Its function is as follows. Catalyzes the reduction of the glycolytic intermediate dihydroxyacetone phosphate (DHAP) to sn-glycerol 3-phosphate (G3P), the key precursor for phospholipid synthesis. The protein is Glycerol-3-phosphate dehydrogenase [NAD(P)+] of Novosphingobium aromaticivorans (strain ATCC 700278 / DSM 12444 / CCUG 56034 / CIP 105152 / NBRC 16084 / F199).